Here is a 320-residue protein sequence, read N- to C-terminus: Alpha/beta hydrolase domain-containing protein 17C (320 aa).

Positions 50-75 (RAPAPAATPAPAPAAQPAPAEEGAGP) are disordered. The span at 55-65 (AATPAPAPAAQ) shows a compositional bias: pro residues. Catalysis depends on charge relay system residues Ser-202, Asp-267, and His-296.

The protein belongs to the AB hydrolase superfamily. ABHD17 family. Palmitoylated on cysteine residues located in a cysteine cluster at the N-terminus which promotes membrane localization. Palmitoylation is required for post-synaptic localization and for depalmitoylating activity towards DLG4/PSD95.

It is found in the recycling endosome membrane. The protein localises to the cell projection. It localises to the dendritic spine. The protein resides in the postsynaptic density membrane. The enzyme catalyses S-hexadecanoyl-L-cysteinyl-[protein] + H2O = L-cysteinyl-[protein] + hexadecanoate + H(+). Hydrolyzes fatty acids from S-acylated cysteine residues in proteins. Has depalmitoylating activity towards DLG4/PSD95. The polypeptide is Alpha/beta hydrolase domain-containing protein 17C (Mus musculus (Mouse)).